Reading from the N-terminus, the 330-residue chain is Aspartate--ammonia ligase (330 aa).

It belongs to the class-II aminoacyl-tRNA synthetase family. AsnA subfamily.

The protein resides in the cytoplasm. It carries out the reaction L-aspartate + NH4(+) + ATP = L-asparagine + AMP + diphosphate + H(+). It participates in amino-acid biosynthesis; L-asparagine biosynthesis; L-asparagine from L-aspartate (ammonia route): step 1/1. This chain is Aspartate--ammonia ligase, found in Escherichia coli O81 (strain ED1a).